Consider the following 217-residue polypeptide: Large ribosomal subunit protein uL1 (217 aa).

The protein belongs to the universal ribosomal protein uL1 family.

In Eremothecium gossypii (strain ATCC 10895 / CBS 109.51 / FGSC 9923 / NRRL Y-1056) (Yeast), this protein is Large ribosomal subunit protein uL1 (RPL10A).